A 235-amino-acid chain; its full sequence is Phosphoribosylaminoimidazole-succinocarboxamide synthase (235 aa).

It belongs to the SAICAR synthetase family.

The catalysed reaction is 5-amino-1-(5-phospho-D-ribosyl)imidazole-4-carboxylate + L-aspartate + ATP = (2S)-2-[5-amino-1-(5-phospho-beta-D-ribosyl)imidazole-4-carboxamido]succinate + ADP + phosphate + 2 H(+). Its pathway is purine metabolism; IMP biosynthesis via de novo pathway; 5-amino-1-(5-phospho-D-ribosyl)imidazole-4-carboxamide from 5-amino-1-(5-phospho-D-ribosyl)imidazole-4-carboxylate: step 1/2. The sequence is that of Phosphoribosylaminoimidazole-succinocarboxamide synthase from Prosthecochloris aestuarii (strain DSM 271 / SK 413).